We begin with the raw amino-acid sequence, 270 residues long: uncharacterized protein (270 aa).

A signal peptide spans 1–22; it reads MGYIKRMALYMSVFLLIIFIVG. The N-palmitoyl cysteine moiety is linked to residue C23. C23 carries S-diacylglycerol cysteine lipidation.

It belongs to the staphylococcal tandem lipoprotein family.

It is found in the cell membrane. This is an uncharacterized protein from Staphylococcus aureus (strain COL).